Consider the following 308-residue polypeptide: Transcription factor JunB (308 aa).

The basic motif stretch occupies residues 229-256; it reads RIKAERKRLRNRLAATKCRKRKLERISR. One can recognise a bZIP domain in the interval 229-292; the sequence is RIKAERKRLR…AQLKQKVLRH (64 aa). A leucine-zipper region spans residues 257-285; sequence LEEKVKVLKNDNAGLSNTASVLRDQVAQL.

It belongs to the bZIP family. Jun subfamily. As to quaternary structure, binds DNA as a homodimer or as a heterodimer with another member of the jun/fos family.

The protein resides in the nucleus. Its function is as follows. Transcription factor involved in regulating gene activity following the primary growth factor response. Binds to the DNA sequence 5'-TGA[CG]TCA-3'. This is Transcription factor JunB (junb) from Cyprinus carpio (Common carp).